Here is a 515-residue protein sequence, read N- to C-terminus: SWI/SNF-related matrix-associated actin-dependent regulator of chromatin subfamily D member 1 (515 aa).

The segment at 1-128 (MAARAGFQSV…RNHNAKKKKM (128 aa)) is disordered. The segment covering 14–23 (GGAGASGGAG) has biased composition (gly residues). Positions 43 to 167 (APGQGLYRSP…DQTIMRKRLD (125 aa)) are interaction with ESR1, NR1H4, NR3C1, PGR and SMARCA4. An asymmetric dimethylarginine mark is found at arginine 68 and arginine 88. Lysine 101 participates in a covalent cross-link: Glycyl lysine isopeptide (Lys-Gly) (interchain with G-Cter in SUMO2). Low complexity predominate over residues 103 to 117 (PAPQQIKQVQQQAVQ). Residues 168–474 (IQEALKRPIK…VMTDVVGNSE (307 aa)) are interaction with SMARCC1 and SMARCC2. The segment at 180–515 (RKLRIFISNT…LEQALGIRNT (336 aa)) is necessary for GR/NR3C1-mediated remodeling and transcription from chromatin; required for GR/NR3C1 interaction with the BRG1/SMARCA4 complex in vivo. Residue threonine 203 is modified to Phosphothreonine. Position 223 is an N6-acetyllysine (lysine 223). The 78-residue stretch at 290–367 (YQPPQFKLDP…PQRLHALLMP (78 aa)) folds into the SWIB/MDM2 domain. Residues 412 to 440 (ASQQEIATLDNKIHETIETINQLKTQREF) are a coiled coil.

This sequence belongs to the SMARCD family. Component of the multiprotein chromatin-remodeling complexes SWI/SNF: SWI/SNF-A (BAF), SWI/SNF-B (PBAF) and related complexes. The canonical complex contains a catalytic subunit (either SMARCA4/BRG1/BAF190A or SMARCA2/BRM/BAF190B), and at least SMARCE1, ACTL6A/BAF53, SMARCC1/BAF155, SMARCC2/BAF170, and SMARCB1/SNF5/BAF47. Other subunits specific to each of the complexes may also be present permitting several possible combinations developmentally and tissue specific. Component of the BAF complex, which includes at least actin (ACTB), ARID1A/BAF250A, ARID1B/BAF250B, SMARCA2/BRM, SMARCA4/BRG1/BAF190A, ACTL6A/BAF53, ACTL6B/BAF53B, SMARCE1/BAF57, SMARCC1/BAF155, SMARCC2/BAF170, SMARCB1/SNF5/INI1, and one or more SMARCD1/BAF60A, SMARCD2/BAF60B, or SMARCD3/BAF60C. In muscle cells, the BAF complex also contains DPF3. Component of neural progenitors-specific chromatin remodeling complex (npBAF complex) composed of at least, ARID1A/BAF250A or ARID1B/BAF250B, SMARCD1/BAF60A, SMARCD3/BAF60C, SMARCA2/BRM/BAF190B, SMARCA4/BRG1/BAF190A, SMARCB1/BAF47, SMARCC1/BAF155, SMARCE1/BAF57, SMARCC2/BAF170, PHF10/BAF45A, ACTL6A/BAF53A and actin. Component of neuron-specific chromatin remodeling complex (nBAF complex) composed of at least, ARID1A/BAF250A or ARID1B/BAF250B, SMARCD1/BAF60A, SMARCD3/BAF60C, SMARCA2/BRM/BAF190B, SMARCA4/BRG1/BAF190A, SMARCB1/BAF47, SMARCC1/BAF155, SMARCE1/BAF57, SMARCC2/BAF170, DPF1/BAF45B, DPF3/BAF45C, ACTL6B/BAF53B and actin. Component of the SWI/SNF-B (PBAF) chromatin remodeling complex, at least composed of SMARCA4/BRG1, SMARCB1/BAF47/SNF5, ACTL6A/BAF53A or ACTL6B/BAF53B, SMARCE1/BAF57, SMARCD1/BAF60A, SMARCD2/BAF60B, perhaps SMARCD3/BAF60C, SMARCC1/BAF155, SMARCC2/BAF170, PBRM1/BAF180, ARID2/BAF200 and actin (ACTB). Component of SWI/SNF (GBAF) subcomplex, which includes at least BICRA or BICRAL (mutually exclusive), BRD9, SS18, SMARCA2/BRM, SMARCA4/BRG1/BAF190A, ACTL6A/BAF53, SMARCC1/BAF155, and SMARCD1/BAF60A. Specifically interacts with the VDR heterodimer complex. Interacts with ESR1, NR3C1, NR1H4, PGR, SMARCA4, SMARCC1 and SMARCC2. Interacts with DPF2. Interacts with FOS, FOSB, FOSL1 and FOSL2.

Its subcellular location is the nucleus. Involved in transcriptional activation and repression of select genes by chromatin remodeling (alteration of DNA-nucleosome topology). Component of SWI/SNF chromatin remodeling complexes that carry out key enzymatic activities, changing chromatin structure by altering DNA-histone contacts within a nucleosome in an ATP-dependent manner. Belongs to the neural progenitors-specific chromatin remodeling complex (npBAF complex) and the neuron-specific chromatin remodeling complex (nBAF complex). During neural development a switch from a stem/progenitor to a postmitotic chromatin remodeling mechanism occurs as neurons exit the cell cycle and become committed to their adult state. The transition from proliferating neural stem/progenitor cells to postmitotic neurons requires a switch in subunit composition of the npBAF and nBAF complexes. As neural progenitors exit mitosis and differentiate into neurons, npBAF complexes which contain ACTL6A/BAF53A and PHF10/BAF45A, are exchanged for homologous alternative ACTL6B/BAF53B and DPF1/BAF45B or DPF3/BAF45C subunits in neuron-specific complexes (nBAF). The npBAF complex is essential for the self-renewal/proliferative capacity of the multipotent neural stem cells. The nBAF complex along with CREST plays a role regulating the activity of genes essential for dendrite growth. Has a strong influence on vitamin D-mediated transcriptional activity from an enhancer vitamin D receptor element (VDRE). May be a link between mammalian SWI-SNF-like chromatin remodeling complexes and the vitamin D receptor (VDR) heterodimer. Mediates critical interactions between nuclear receptors and the BRG1/SMARCA4 chromatin-remodeling complex for transactivation. Interacts with AKIRIN2. The chain is SWI/SNF-related matrix-associated actin-dependent regulator of chromatin subfamily D member 1 (SMARCD1) from Bos taurus (Bovine).